The following is a 249-amino-acid chain: DNA repair protein RecO (249 aa).

The protein belongs to the RecO family.

Involved in DNA repair and RecF pathway recombination. The protein is DNA repair protein RecO of Exiguobacterium sp. (strain ATCC BAA-1283 / AT1b).